A 637-amino-acid chain; its full sequence is 1-deoxy-D-xylulose-5-phosphate synthase (637 aa).

Thiamine diphosphate-binding positions include His-82 and 123-125; that span reads GHA. Asp-154 is a binding site for Mg(2+). Residues 155–156, Asn-183, Tyr-295, and Glu-378 contribute to the thiamine diphosphate site; that span reads GS. Asn-183 provides a ligand contact to Mg(2+).

It belongs to the transketolase family. DXPS subfamily. Homodimer. It depends on Mg(2+) as a cofactor. Thiamine diphosphate is required as a cofactor.

It carries out the reaction D-glyceraldehyde 3-phosphate + pyruvate + H(+) = 1-deoxy-D-xylulose 5-phosphate + CO2. It functions in the pathway metabolic intermediate biosynthesis; 1-deoxy-D-xylulose 5-phosphate biosynthesis; 1-deoxy-D-xylulose 5-phosphate from D-glyceraldehyde 3-phosphate and pyruvate: step 1/1. Its function is as follows. Catalyzes the acyloin condensation reaction between C atoms 2 and 3 of pyruvate and glyceraldehyde 3-phosphate to yield 1-deoxy-D-xylulose-5-phosphate (DXP). The polypeptide is 1-deoxy-D-xylulose-5-phosphate synthase (Lawsonia intracellularis (strain PHE/MN1-00)).